We begin with the raw amino-acid sequence, 273 residues long: Histone H1.2 (273 aa).

The segment at 1–63 (MSIEEENVPT…TKKKTTSSHP (63 aa)) is disordered. The residue at position 2 (serine 2) is an N-acetylserine. Serine 14 is modified (phosphoserine). A compositionally biased stretch (basic residues) spans 33–59 (GKSKKTTTAKATKKPVKAAAPTKKKTT). Positions 61 to 130 (SHPTYEEMIK…KVKASFKIPS (70 aa)) constitute an H15 domain. Glycyl lysine isopeptide (Lys-Gly) (interchain with G-Cter in ubiquitin) cross-links involve residues lysine 156 and lysine 165. Composition is skewed to low complexity over residues 193-216 (KVTAAKPKSKSVAAVSKTKAVAAK) and 237-256 (KKVAAPAKKVAVTKKAPAKS). A disordered region spans residues 193–273 (KVTAAKPKSK…KRASTRKAKK (81 aa)). Positions 257 to 273 (VKVKSPAKRASTRKAKK) are enriched in basic residues.

Belongs to the histone H1/H5 family.

The protein localises to the nucleus. It localises to the chromosome. Its function is as follows. Histones H1 are necessary for the condensation of nucleosome chains into higher-order structures. The polypeptide is Histone H1.2 (Arabidopsis thaliana (Mouse-ear cress)).